Here is a 368-residue protein sequence, read N- to C-terminus: uncharacterized protein (368 aa).

5 helical membrane-spanning segments follow: residues 22-42 (VAGI…FTLI), 74-94 (FVKP…LLVL), 104-124 (FLKT…LNLF), 144-164 (VGDF…GASL), and 168-188 (WGVN…AVSL).

This sequence belongs to the MscS (TC 1.A.23) family.

Its subcellular location is the cell membrane. This is an uncharacterized protein from Aquifex aeolicus (strain VF5).